A 728-amino-acid chain; its full sequence is MVFGFTKRDRRVPDLSRYDYYYQNHEDYNKSPQLSAAAASAASAASPDRTNYSRSHSLVSHAPSIPRQRSSVKSPGRRLSTSSAAPPTSRAAAKQYSQKTYSLRSQRSGEYHLHPPGYTTNGSRMNSMTSGANVRRNYGKNKSTAGNNNDSRANSITVKTTQVTDPSGRTQSITKKTIRKINGYEYVETTTTTKNLVPLGDSQRHFDEFSENYMLQDDDILEEQASDNIHDIIEENETDNEKPYSPVSESHLQDDSELNVEKPDFPLGSYFHHKYSTDVMPLEEESSLSNFSDALDYIPPTHQTSSKYIHNKRKQASTTRRKKRPPAVKNAEAEAKKPLTEAEMYLKALEVAKRNVYHTDAASDNASAPLGSNKSRKSRMGQKMTLRSSSDSPTATANLVKSNVEVQPKRFTSSFFSRNTKSAPHEVHNHSVSTHFKSNKAVDPVPEPKSANTGLTDKEMYDQALKIAQARYYNSHGIQPEAVDNSTTAAKPRQVGVSHLGSTGSIPPNEQHYLGDSEIPVQSEVHEYEPIPLQKTKTTGSSKNKFKTMFDKVLQFSQENYGYQHKKEQGEQTPVTRNAEESFPAASISEGVTTAKPSSNEGVMTNPVVTDSPSPLQQQIDSTTASSNGQSQGNVPTSAVASTTRTRSPELQDNLKSSSSLLQDQTPQRQEDATDPTTSSTNELSAAEPTMVTSTHATKTIQAQTQDPPTKHKKSSFFTKLFKKKSSR.

Disordered stretches follow at residues 33-171, 236-261, 300-335, 363-403, 422-454, 495-514, and 561-728; these read QLSA…GRTQ, NETD…LNVE, PTHQ…EAEA, SDNA…VKSN, SAPH…ANTG, VGVS…QHYL, and YGYQ…KSSR. Over residues 35–46 the composition is skewed to low complexity; it reads SAAAASAASAAS. Over residues 48-58 the composition is skewed to polar residues; that stretch reads DRTNYSRSHSL. 2 positions are modified to phosphoserine: Ser57 and Ser64. The span at 80–93 shows a compositional bias: low complexity; the sequence is STSSAAPPTSRAAA. 3 stretches are compositionally biased toward polar residues: residues 95–106, 118–132, and 140–171; these read QYSQKTYSLRSQ, YTTN…TSGA, and KNKS…GRTQ. A phosphoserine mark is found at Ser127, Ser151, and Ser155. Basic and acidic residues predominate over residues 251–261; it reads HLQDDSELNVE. A compositionally biased stretch (basic residues) spans 309–326; that stretch reads IHNKRKQASTTRRKKRPP. The residue at position 363 (Ser363) is a Phosphoserine. Polar residues-rich tracts occupy residues 363–373 and 385–403; these read SDNASAPLGSN and TLRS…VKSN. Positions 590–634 are enriched in polar residues; it reads EGVTTAKPSSNEGVMTNPVVTDSPSPLQQQIDSTTASSNGQSQGN. Residues 635–646 are compositionally biased toward low complexity; the sequence is VPTSAVASTTRT. Thr646 is modified (phosphothreonine). 3 stretches are compositionally biased toward polar residues: residues 654–668, 675–684, and 691–708; these read NLKS…QTPQ, DPTTSSTNEL, and MVTS…TQDP. Phosphoserine is present on Ser660. The span at 711 to 728 shows a compositional bias: basic residues; that stretch reads KHKKSSFFTKLFKKKSSR.

The protein localises to the cell membrane. Its function is as follows. May be involved in the control of meiotic sister-chromatid recombination. In Saccharomyces cerevisiae (strain ATCC 204508 / S288c) (Baker's yeast), this protein is Meiotic sister-chromatid recombination protein 3 (MSC3).